The following is a 292-amino-acid chain: uncharacterized protein (292 aa).

The chain crosses the membrane as a helical span at residues 175–197 (VLNFYFTALPYAIDGIISGIGVF).

The protein localises to the membrane. This is an uncharacterized protein from Methanocaldococcus jannaschii (strain ATCC 43067 / DSM 2661 / JAL-1 / JCM 10045 / NBRC 100440) (Methanococcus jannaschii).